The chain runs to 812 residues: Phospholipase D alpha 2 (812 aa).

Positions 1-36 are excised as a propeptide; that stretch reads MAQHLLHGTLHATIYEVDALHTGGLRSAGFLGKIIS. A C2 domain is found at 1–127; the sequence is MAQHLLHGTL…INGEEVEKWV (127 aa). Residues 328–368 enclose the PLD phosphodiesterase 1 domain; that stretch reads AMFTHHQKIVVVDSEVPSQGGGSEMRRIMSFVGGIDLCDGR. Catalysis depends on residues His-333, Lys-335, and Asp-340. A 1,2-diacyl-sn-glycero-3-phosphate is bound at residue His-333. Residue His-374 coordinates Ca(2+). A 1,2-diacyl-sn-glycero-3-phosphate is bound by residues Gln-524 and His-663. In terms of domain architecture, PLD phosphodiesterase 2 spans 658-685; sequence FMIYVHSKMMIVDDEYIIVGSANINQRS. Residues His-663, Lys-665, and Asp-670 contribute to the active site. Residue Glu-724 participates in Ca(2+) binding.

The protein belongs to the phospholipase D family. C2-PLD subfamily. It depends on Ca(2+) as a cofactor.

It localises to the cytoplasm. The protein resides in the membrane. The catalysed reaction is a 1,2-diacyl-sn-glycero-3-phosphocholine + H2O = a 1,2-diacyl-sn-glycero-3-phosphate + choline + H(+). Its function is as follows. Hydrolyzes glycerol-phospholipids at the terminal phosphodiesteric bond. Plays an important role in various cellular processes, including phytohormone action, vesicular trafficking, secretion, cytoskeletal arrangement, meiosis, tumor promotion, pathogenesis, membrane deterioration and senescence. This Brassica oleracea var. capitata (Cabbage) protein is Phospholipase D alpha 2 (PLD2).